A 277-amino-acid chain; its full sequence is Large ribosomal subunit protein uL2 (277 aa).

The disordered stretch occupies residues M225–R277. Basic residues predominate over residues K254–H264.

Belongs to the universal ribosomal protein uL2 family. In terms of assembly, part of the 50S ribosomal subunit. Forms a bridge to the 30S subunit in the 70S ribosome.

In terms of biological role, one of the primary rRNA binding proteins. Required for association of the 30S and 50S subunits to form the 70S ribosome, for tRNA binding and peptide bond formation. It has been suggested to have peptidyltransferase activity; this is somewhat controversial. Makes several contacts with the 16S rRNA in the 70S ribosome. In Anaplasma marginale (strain Florida), this protein is Large ribosomal subunit protein uL2.